A 258-amino-acid polypeptide reads, in one-letter code: Small ribosomal subunit protein uS2 (258 aa).

Belongs to the universal ribosomal protein uS2 family.

The sequence is that of Small ribosomal subunit protein uS2 from Granulibacter bethesdensis (strain ATCC BAA-1260 / CGDNIH1).